A 128-amino-acid chain; its full sequence is CD59 glycoprotein (128 aa).

Residues M1–S25 form the signal peptide. The 83-residue stretch at L26–S108 folds into the UPAR/Ly6 domain. 5 disulfides stabilise this stretch: C28/C51, C31/C38, C44/C64, C70/C88, and C89/C94. N43 carries an N-linked (GlcNAc...) asparagine glycan. A lipid anchor (GPI-anchor amidated asparagine) is attached at N102. Positions G103 to P128 are cleaved as a propeptide — removed in mature form.

Interacts with T-cell surface antigen CD2. In terms of processing, N- and O-glycosylated.

It is found in the cell membrane. The protein localises to the secreted. Potent inhibitor of the complement membrane attack complex (MAC) action, which protects self-cells from damage during complement activation. Acts by binding to the beta-haipins of C8 (C8A and C8B) components of the assembling MAC, forming an intermolecular beta-sheet that prevents incorporation of the multiple copies of C9 required for complete formation of the osmolytic pore. The polypeptide is CD59 glycoprotein (Callithrix sp. (Marmoset)).